The sequence spans 148 residues: NTR domain-containing protein (148 aa).

A signal peptide spans methionine 1 to alanine 26. 3 cysteine pairs are disulfide-bonded: cysteine 27-cysteine 96, cysteine 29-cysteine 122, and cysteine 40-cysteine 146. The NTR domain maps to cysteine 27–cysteine 146.

In terms of tissue distribution, prismatic layer of shell (at protein level). Expressed primarily in the mantle with highest level in the mantle edge and lower level in the mantle pallium.

It localises to the secreted. The chain is NTR domain-containing protein from Margaritifera margaritifera (Freshwater pearl mussel).